The primary structure comprises 101 residues: A-type ATP synthase subunit K (101 aa).

Transmembrane regions (helical) follow at residues Ala-4 to Ala-24, Phe-32 to Val-52, and Val-75 to Leu-95.

This sequence belongs to the V-ATPase proteolipid subunit family. Has multiple subunits with at least A(3), B(3), C, D, E, F, H, I and proteolipid K(x).

The protein resides in the cell membrane. In terms of biological role, component of the A-type ATP synthase that produces ATP from ADP in the presence of a proton gradient across the membrane. The polypeptide is A-type ATP synthase subunit K (Sulfolobus acidocaldarius (strain ATCC 33909 / DSM 639 / JCM 8929 / NBRC 15157 / NCIMB 11770)).